Here is a 522-residue protein sequence, read N- to C-terminus: 2-isopropylmalate synthase (522 aa).

The region spanning 5 to 267 (VIIFDTTLRD…ETGINAKEIH (263 aa)) is the Pyruvate carboxyltransferase domain. Positions 14, 202, 204, and 238 each coordinate Mn(2+). Residues 392-522 (QLQQLVVQSD…MQKNRELGGV (131 aa)) are regulatory domain.

The protein belongs to the alpha-IPM synthase/homocitrate synthase family. LeuA type 1 subfamily. In terms of assembly, homodimer. It depends on Mn(2+) as a cofactor.

The protein resides in the cytoplasm. It catalyses the reaction 3-methyl-2-oxobutanoate + acetyl-CoA + H2O = (2S)-2-isopropylmalate + CoA + H(+). It participates in amino-acid biosynthesis; L-leucine biosynthesis; L-leucine from 3-methyl-2-oxobutanoate: step 1/4. Catalyzes the condensation of the acetyl group of acetyl-CoA with 3-methyl-2-oxobutanoate (2-ketoisovalerate) to form 3-carboxy-3-hydroxy-4-methylpentanoate (2-isopropylmalate). This Shewanella baltica (strain OS185) protein is 2-isopropylmalate synthase.